A 795-amino-acid polypeptide reads, in one-letter code: Phenylalanine--tRNA ligase beta subunit (795 aa).

The tRNA-binding domain maps to 39-148 (AGTFNGVKVG…IDAPIGMDFR (110 aa)). The B5 domain maps to 401–476 (PKPNKVALRR…RIYGYDNIPN (76 aa)). Asp454, Asp460, Glu463, and Glu464 together coordinate Mg(2+). In terms of domain architecture, FDX-ACB spans 701–794 (SKFPANRRDI…VSEKFGASLR (94 aa)).

This sequence belongs to the phenylalanyl-tRNA synthetase beta subunit family. Type 1 subfamily. As to quaternary structure, tetramer of two alpha and two beta subunits. Mg(2+) is required as a cofactor.

The protein resides in the cytoplasm. The enzyme catalyses tRNA(Phe) + L-phenylalanine + ATP = L-phenylalanyl-tRNA(Phe) + AMP + diphosphate + H(+). In Vibrio vulnificus (strain YJ016), this protein is Phenylalanine--tRNA ligase beta subunit.